We begin with the raw amino-acid sequence, 480 residues long: MVKEPNGVTRTMRRIRRIHFVGIGGAGMCGIAEVLLNLGYEVSGSDLKASAVTERLEKFGAQIFIGHQAENADGADVLVVSSAINRANPEVASALERRIPVVPRAEMLAELMRYRHGIAVAGTHGKTTTTSLIASVFAAGGLDPTFVIGGRLNAAGTNAQLGASRYLVAEADESDASFLHLQPMVAVVTNIDADHMATYGGDFNKLKKTFVEFLHNLPFYGLAVMCVDDPVVREILPQIARPTVTYGLSEDADVRAINIRQEGMRTWFTVLRPEREPLDVSVNMPGLHNVLNSLATIVIATDEGISDEAIVQGLSGFQGVGRRFQVYGELQVEGGSVMLVDDYGHHPREVAAVIKAIRGGWPERRLVMVYQPHRYTRTRDLYEDFVQVLGEANVLLLMEVYPAGEEPIPGADSRQLCHSIRQRGQLDPIYFERDADLAPLVKPLLRAGDILLCQGAGDVGGLAPQLIKNPLFAGKGGKGA.

122–128 (GTHGKTT) contributes to the ATP binding site.

This sequence belongs to the MurCDEF family.

The protein localises to the cytoplasm. The enzyme catalyses UDP-N-acetyl-alpha-D-muramate + L-alanine + ATP = UDP-N-acetyl-alpha-D-muramoyl-L-alanine + ADP + phosphate + H(+). It functions in the pathway cell wall biogenesis; peptidoglycan biosynthesis. Its function is as follows. Cell wall formation. This is UDP-N-acetylmuramate--L-alanine ligase from Pseudomonas aeruginosa (strain LESB58).